Here is a 355-residue protein sequence, read N- to C-terminus: (R,S)-reticuline 7-O-methyltransferase (355 aa).

S-adenosyl-L-methionine is bound by residues 197–200 (VGGG), Asp221, 221–222 (DL), 241–242 (DM), and Lys255. His259 functions as the Proton acceptor in the catalytic mechanism.

The protein belongs to the class I-like SAM-binding methyltransferase superfamily. Cation-independent O-methyltransferase family. Homodimer. Expressed in capsules, buds and stems, and at lower levels in leaves. Localized to parenchyma cells within the vascular bundle, but only to those cells distal to laticifers. In roots, found in the pericycle within the stele.

The catalysed reaction is (S)-reticuline + S-adenosyl-L-methionine = (S)-laudanine + S-adenosyl-L-homocysteine + H(+). The enzyme catalyses (R)-reticuline + S-adenosyl-L-methionine = (R)-laudanine + S-adenosyl-L-homocysteine + H(+). In terms of biological role, catalyzes the transfer of a methyl group to reticuline to form laudanine. Methylates the simple catechols guaiacol and isovanillic acid as well as the tetrahydrobenzylisoquinolines (R)-reticuline, (S)-reticuline, (R,S)-orientaline, (R)-protosinomenine and (R,S)-isoorientaline. Involved in the production of laudanine. In Papaver somniferum (Opium poppy), this protein is (R,S)-reticuline 7-O-methyltransferase.